The chain runs to 353 residues: MTAHLPQEISSRCSTTNIMEPHSRRQQDGEEKMPLQAEDIRPEIKDDLYDPSYQDEEGPPPKLEYVWRNIIFMALLHVGALYGITLVPSCKVYTWLLGVFYNVVAGLGITAGAHRLWSHRTYKARLPLRIFLIMANTMAFQNDVYEWARDHRAHHKFSETHADPHNSRRGFFFSHVGWLLVRKHPAVKEKGKNLDMSDLKAEKLVMFQRRYYKLAVTLMFIILPTLVPWYLWGETFQHSLCVSNFLRYAVLLNFTWLVNSAAHLYGYRPYDRGIGARENPFVSMASLGEGFHNYHHTFPYDYSVSEYRWHINFTTFFIDCMAALGLAYDRKKVSKAVVLARIKRTGDGSHKSS.

The interval 1-42 is disordered; that stretch reads MTAHLPQEISSRCSTTNIMEPHSRRQQDGEEKMPLQAEDIRP. Residues 1–66 lie on the Cytoplasmic side of the membrane; it reads MTAHLPQEIS…EGPPPKLEYV (66 aa). Residues 8–18 show a composition bias toward polar residues; that stretch reads EISSRCSTTNI. The segment covering 21-42 has biased composition (basic and acidic residues); that stretch reads PHSRRQQDGEEKMPLQAEDIRP. The helical transmembrane segment at 67–87 threads the bilayer; it reads WRNIIFMALLHVGALYGITLV. N69 contributes to the substrate binding site. At 88-91 the chain is on the lumenal side; it reads PSCK. The helical transmembrane segment at 92–112 threads the bilayer; it reads VYTWLLGVFYNVVAGLGITAG. Topologically, residues 113 to 211 are cytoplasmic; the sequence is AHRLWSHRTY…EKLVMFQRRY (99 aa). Residues H114 and H119 each contribute to the Fe cation site. The short motif at 114–119 is the Histidine box-1 element; sequence HRLWSH. 3 residues coordinate substrate: N142, R149, and D150. Fe cation contacts are provided by H151, H154, and H155. The Histidine box-2 signature appears at 151-155; that stretch reads HRAHH. Substrate-binding residues include R182 and K183. The helical transmembrane segment at 212–231 threads the bilayer; it reads YKLAVTLMFIILPTLVPWYL. Residues 232–235 are Lumenal-facing; sequence WGET. The chain crosses the membrane as a helical span at residues 236–257; that stretch reads FQHSLCVSNFLRYAVLLNFTWL. Substrate is bound at residue W256. Topologically, residues 258–353 are cytoplasmic; that stretch reads VNSAAHLYGY…RTGDGSHKSS (96 aa). Residues H263, H292, H295, and H296 each coordinate Fe cation. The Histidine box-3 signature appears at 292–296; sequence HNYHH.

This sequence belongs to the fatty acid desaturase type 1 family. Fe(2+) is required as a cofactor. As to expression, detected in heart, but not in brain, liver, skin or adipose tissue.

The protein localises to the endoplasmic reticulum membrane. It localises to the microsome membrane. The catalysed reaction is octadecanoyl-CoA + 2 Fe(II)-[cytochrome b5] + O2 + 2 H(+) = (9Z)-octadecenoyl-CoA + 2 Fe(III)-[cytochrome b5] + 2 H2O. It catalyses the reaction hexadecanoyl-CoA + 2 Fe(II)-[cytochrome b5] + O2 + 2 H(+) = (9Z)-hexadecenoyl-CoA + 2 Fe(III)-[cytochrome b5] + 2 H2O. Stearoyl-CoA desaturase that utilizes O(2) and electrons from reduced cytochrome b5 to introduce the first double bond into saturated fatty acyl-CoA substrates. Catalyzes the insertion of a cis double bond at the delta-9 position into fatty acyl-CoA substrates including palmitoyl-CoA and stearoyl-CoA. Required for the biosynthesis of membrane phospholipids, cholesterol esters and triglycerides. The polypeptide is Stearoyl-CoA desaturase 4 (Mus musculus (Mouse)).